Consider the following 196-residue polypeptide: Flagellin B2 (196 aa).

Residues 1-12 (MFEFITDEDERG) constitute a propeptide that is removed on maturation.

The protein belongs to the archaeal flagellin family. Post-translationally, glycosylated.

The protein resides in the archaeal flagellum. Flagellin is the subunit protein which polymerizes to form the filaments of archaeal flagella. The sequence is that of Flagellin B2 (flaB2) from Halobacterium salinarum (strain ATCC 700922 / JCM 11081 / NRC-1) (Halobacterium halobium).